The sequence spans 274 residues: Lipid phosphate phosphatase 1 (274 aa).

Over 1–15 the chain is Lumenal; sequence MISVMADEKHKEYFK. The helical transmembrane segment at 16–33 threads the bilayer; that stretch reads LYYFQYMIIGLCTILFLY. At 34-69 the chain is on the cytoplasmic side; the sequence is SEISLVPRGQNIEFSLDDPSISKRYVPNELVGPLEC. A helical transmembrane segment spans residues 70–87; sequence LILSVGLSNMVVFWTCMF. Residues 88–117 lie on the Lumenal side of the membrane; sequence DKDLLKKNRVKRLRERPDGISNDFHFMHTS. A helical transmembrane segment spans residues 118 to 139; the sequence is ILCLMLIISINAALTGALKLII. A phosphatase sequence motif I region spans residues 136–144; sequence KLIIGNLRP. Topologically, residues 140-189 are cytoplasmic; the sequence is GNLRPDFVDRCIPDLQKMSDSDSLVFGLDICKQTNKWILYEGLKSTPSGH. Residues 186-189 form a phosphatase sequence motif II region; that stretch reads PSGH. Residues 190-203 traverse the membrane as a helical segment; that stretch reads SSFIVSTMGFTYLW. Residues 204-214 lie on the Lumenal side of the membrane; that stretch reads QRVFTTRNTRS. The helical transmembrane segment at 215–231 threads the bilayer; sequence CIWCPLLALVVMVSRVI. Residues 228–239 are phosphatase sequence motif III; the sequence is SRVIDHRHHWYD. Topologically, residues 232–237 are cytoplasmic; the sequence is DHRHHW. Residues 238 to 255 form a helical membrane-spanning segment; the sequence is YDVVSGAVLAFLVIYCCW. Topologically, residues 256 to 274 are lumenal; sequence KWTFTNLAKRDILPSPVSV.

Belongs to the PA-phosphatase related phosphoesterase family.

It is found in the golgi apparatus membrane. It carries out the reaction a 1,2-diacyl-sn-glycerol 3-diphosphate + H2O = a 1,2-diacyl-sn-glycero-3-phosphate + phosphate + H(+). The enzyme catalyses a 1,2-diacyl-sn-glycero-3-phosphate + H2O = a 1,2-diacyl-sn-glycerol + phosphate. It catalyses the reaction a 1-acyl-sn-glycero-3-phosphate + H2O = a 1-acyl-sn-glycerol + phosphate. Its activity is regulated as follows. PA phosphatase activity is magnesium ion-independent and potently inhibited by N-ethylmaleimide. Also inhibited by phenylglyoxal and propranolol. Its function is as follows. Catalyzes the dephosphorylation of diacylglycerol diphosphate (DGPP) to phosphatidate (PA) and the subsequent dephosphorylation of PA to diacylglycerol (DAG). Together with DPP1, regulates intracellular DGPP and PA levels which are phospholipid molecules believed to play a signaling role in stress response. Can also use lysophosphatidic acid (LPA) as a substrate. Substrate preference is PA &gt; DGPP &gt; LPA. The sequence is that of Lipid phosphate phosphatase 1 (LPP1) from Saccharomyces cerevisiae (strain ATCC 204508 / S288c) (Baker's yeast).